The primary structure comprises 123 residues: UPF0299 membrane protein VV1471 (123 aa).

Helical transmembrane passes span L8 to I28, S35 to V55, M71 to A91, and L94 to L114.

This sequence belongs to the UPF0299 family.

It is found in the cell inner membrane. In Vibrio vulnificus (strain YJ016), this protein is UPF0299 membrane protein VV1471.